Here is a 376-residue protein sequence, read N- to C-terminus: Drebrin-like protein B (376 aa).

The ADF-H domain maps to 2-133 (SVNLSKNGAA…EPESIMEKVA (132 aa)). A coiled-coil region spans residues 175 to 231 (KENFWAKAEKDEEERRIEEHRRANVEKDRLERERKEREQREAEERERRFRERSKEID). Positions 202–242 (DRLERERKEREQREAEERERRFRERSKEIDGHRKQQEEVEK) are enriched in basic and acidic residues. The segment at 202–288 (DRLERERKER…FTASQQEEEN (87 aa)) is disordered. Residues 268–283 (ESGSVSAQPEQFTASQ) show a composition bias toward polar residues. Positions 317–376 (DSGMCARALYDYQAADDTEISFDPDDVIIQIEMIDDGWWRGVAPSGHFGMFPANYVELLE) constitute an SH3 domain.

Belongs to the ABP1 family.

It localises to the cytoplasm. The protein resides in the cytoskeleton. It is found in the cell projection. The protein localises to the lamellipodium. Its subcellular location is the ruffle. It localises to the cell cortex. The protein resides in the cytosol. It is found in the synapse. The protein localises to the perikaryon. Its subcellular location is the neuron projection. It localises to the cell membrane. The protein resides in the cytoplasmic vesicle. It is found in the clathrin-coated vesicle membrane. The protein localises to the golgi apparatus membrane. Its subcellular location is the podosome. It localises to the early endosome. The protein resides in the dendrite. It is found in the postsynaptic density. In terms of biological role, adapter protein that binds F-actin and dynamin, and thereby plays a role in receptor-mediated endocytosis. Plays a role in the reorganization of the actin cytoskeleton, formation of cell projections, such as neurites, in neuron morphogenesis and synapse formation. Does not bind G-actin and promote actin polymerization by itself, but excerts its functions by interaction with other proteins. Required for the formation of organized podosome rosettes. This chain is Drebrin-like protein B (dbnl-b), found in Xenopus laevis (African clawed frog).